A 273-amino-acid chain; its full sequence is Large ribosomal subunit protein uL29m (273 aa).

Basic and acidic residues predominate over residues 247–258 (PLRHDRWEKGQE). The interval 247-273 (PLRHDRWEKGQEENSGGETEDGNAPSN) is disordered.

It belongs to the universal ribosomal protein uL29 family. As to quaternary structure, component of the mitochondrial large ribosomal subunit. Mature mitochondrial ribosomes consist of a small (37S) and a large (54S) subunit. The 37S subunit contains at least 33 different proteins and 1 molecule of RNA (15S). The 54S subunit contains at least 45 different proteins and 1 molecule of RNA (21S).

It is found in the mitochondrion. The chain is Large ribosomal subunit protein uL29m (mrpl4) from Aspergillus niger (strain ATCC MYA-4892 / CBS 513.88 / FGSC A1513).